Consider the following 396-residue polypeptide: Elongation factor Tu (396 aa).

One can recognise a tr-type G domain in the interval 10-206; it reads KPHVNVGTIG…ALDSYIPDPE (197 aa). A G1 region spans residues 19-26; sequence GHVDHGKT. A GTP-binding site is contributed by 19 to 26; sequence GHVDHGKT. Mg(2+) is bound at residue Thr26. The interval 60–64 is G2; it reads GITIN. Residues 81 to 84 form a G3 region; the sequence is DCPG. GTP contacts are provided by residues 81 to 85 and 136 to 139; these read DCPGH and NKCD. Residues 136–139 form a G4 region; it reads NKCD. Positions 174–176 are G5; the sequence is SAL.

This sequence belongs to the TRAFAC class translation factor GTPase superfamily. Classic translation factor GTPase family. EF-Tu/EF-1A subfamily. Monomer.

It localises to the cytoplasm. The enzyme catalyses GTP + H2O = GDP + phosphate + H(+). Functionally, GTP hydrolase that promotes the GTP-dependent binding of aminoacyl-tRNA to the A-site of ribosomes during protein biosynthesis. The chain is Elongation factor Tu from Dechloromonas aromatica (strain RCB).